The sequence spans 514 residues: ATP synthase subunit alpha (514 aa).

Position 170–177 (170–177 (GDRQIGKT)) interacts with ATP.

The protein belongs to the ATPase alpha/beta chains family. F-type ATPases have 2 components, CF(1) - the catalytic core - and CF(0) - the membrane proton channel. CF(1) has five subunits: alpha(3), beta(3), gamma(1), delta(1), epsilon(1). CF(0) has three main subunits: a(1), b(2) and c(9-12). The alpha and beta chains form an alternating ring which encloses part of the gamma chain. CF(1) is attached to CF(0) by a central stalk formed by the gamma and epsilon chains, while a peripheral stalk is formed by the delta and b chains.

The protein localises to the cell inner membrane. It carries out the reaction ATP + H2O + 4 H(+)(in) = ADP + phosphate + 5 H(+)(out). Functionally, produces ATP from ADP in the presence of a proton gradient across the membrane. The alpha chain is a regulatory subunit. The protein is ATP synthase subunit alpha of Pseudomonas savastanoi pv. phaseolicola (strain 1448A / Race 6) (Pseudomonas syringae pv. phaseolicola (strain 1448A / Race 6)).